A 168-amino-acid polypeptide reads, in one-letter code: Lipoprotein signal peptidase (168 aa).

4 helical membrane-spanning segments follow: residues 15–35, 47–67, 75–95, and 107–127; these read WLWL…IVME, VLPF…SFLS, WLFT…MSKL, and AMII…GFVV. Residues Asp128 and Asp146 contribute to the active site. Residues 141–161 form a helical membrane-spanning segment; that stretch reads AFNLADTAICLGAAMIILDGF.

This sequence belongs to the peptidase A8 family.

Its subcellular location is the cell inner membrane. The enzyme catalyses Release of signal peptides from bacterial membrane prolipoproteins. Hydrolyzes -Xaa-Yaa-Zaa-|-(S,diacylglyceryl)Cys-, in which Xaa is hydrophobic (preferably Leu), and Yaa (Ala or Ser) and Zaa (Gly or Ala) have small, neutral side chains.. It participates in protein modification; lipoprotein biosynthesis (signal peptide cleavage). Functionally, this protein specifically catalyzes the removal of signal peptides from prolipoproteins. The polypeptide is Lipoprotein signal peptidase (Vibrio vulnificus (strain CMCP6)).